The primary structure comprises 311 residues: MAAAPRTVLISGCSSGIGLELAVQLAHDPKKRYQVVATMRDLGKKETLEAAAGEALGQTLTVAQLDVCSDESVAQCLSCIQGEVDVLVNNAGMGLVGPLEGLSLAAMQNVFDTNFFGAVRLVKAVLPGMKRRRQGHIVVISSVMGLQGVIFNDVYAASKFALEGFFESLAIQLLQFNIFISLVEPGPVVTEFEGKLLAQVSMAEFPGTDPETLHYFRDLYLPASRKLFCSVGQNPQDVVQAIVNVISSTRPPLRRQTNIRYSPLTTLKTVDSSGSLYVRTTHRLLFRCPRLLNLGLQCLSCGCLPTRVRPR.

Leucine 9–glycine 18 serves as a coordination point for NADP(+). 3 consecutive transmembrane segments (helical) span residues valine 86–alanine 106, isoleucine 137–alanine 157, and leucine 169–valine 189. A substrate-binding site is contributed by serine 142. Residue tyrosine 155 is the Proton acceptor of the active site.

It belongs to the short-chain dehydrogenases/reductases (SDR) family. As to expression, detected in photoreceptor outer segments in the retina (at protein level).

The protein resides in the membrane. It catalyses the reaction all-trans-retinol + NADP(+) = all-trans-retinal + NADPH + H(+). Retinol dehydrogenase with a clear preference for NADP. Converts all-trans-retinal to all-trans-retinol. May play a role in the regeneration of visual pigment at high light intensity. In Homo sapiens (Human), this protein is Retinol dehydrogenase 8 (RDH8).